A 785-amino-acid chain; its full sequence is Rho GTPase-activating protein 10 (785 aa).

Residues 7-262 (EFSDCYLDSP…IRQNPKDHKR (256 aa)) form the BAR domain. The PH domain maps to 265–372 (QFTAEGYLYV…WLEVLGGKEA (108 aa)). In terms of domain architecture, Rho-GAP spans 389–574 (AQLDKMGFTI…ILIENHEKIF (186 aa)). A disordered region spans residues 576–708 (TPPDATLPEP…PAVTPPSPKL (133 aa)). Positions 584–595 (EPGPLSAPPNAP) are enriched in pro residues. Basic residues predominate over residues 598-608 (QSKRQGQRTKR). Residues 622 to 632 (GDRPSLPKEDT) show a composition bias toward basic and acidic residues. The span at 633–650 (PPSSLDSLSSPSPTTATA) shows a compositional bias: low complexity. Residues 675 to 697 (APSQARSSAVQWLNPQSPTTPSC) are compositionally biased toward polar residues. The SH3 domain maps to 727 to 785 (IISRKARAVYPCEAEHSSELSFEIGAIFEDVQTSREPGWLEGTLNGKRGLIPQNYVKLL).

In terms of assembly, interacts with PKN3. Interacts with caspase-activated PAK2 proteolytic fragment PAK-2p34; the interaction does not affect ARHGAP10 GTPase activation activity towards RHOA and CDC42. Interacts via its SH3 domain with PTK2/FAK1. Interacts with PTK2B/PYK2; the interaction negatively regulates ARHGAP10 GTPase-activating activity. Interacts with MICAL1 and WDR44; complex formation might transit from GRAF2/ARHGAP10-MICAL1 to GRAF2/ARHGAP10-WDR44 complexes.

Its subcellular location is the cytoplasm. The protein resides in the perinuclear region. It is found in the cell membrane. The protein localises to the endosome membrane. In terms of biological role, GTPase-activating protein that catalyzes the conversion of active GTP-bound Rho GTPases to their inactive GDP-bound form, thus suppressing various Rho GTPase-mediated cellular processes. Also converts Cdc42 to an inactive GDP-bound state. Essential for PTKB2 regulation of cytoskeletal organization via Rho family GTPases. Inhibits PAK2 proteolytic fragment PAK-2p34 kinase activity and changes its localization from the nucleus to the perinuclear region. Stabilizes PAK-2p34 thereby increasing stimulation of cell death. Associates with MICAL1 on the endosomal membrane to promote Rab8-Rab10-dependent tubule extension. After dissociation with MICAL1, recruits WDR44 which connects the endoplasmic reticulum (ER) with the endosomal tubule, thereby participating in the export of a subset of neosynthesized proteins. The chain is Rho GTPase-activating protein 10 (ARHGAP10) from Bos taurus (Bovine).